The chain runs to 100 residues: Coiled-coil domain-containing protein 167 (100 aa).

Residues 14–81 (VASEIDRVEE…VLRGENRRNM (68 aa)) are a coiled coil. Residues 82-99 (MLSVALLAISALFYYTFI) form a helical membrane-spanning segment.

It localises to the membrane. The sequence is that of Coiled-coil domain-containing protein 167 (ccdc167) from Danio rerio (Zebrafish).